We begin with the raw amino-acid sequence, 233 residues long: MAKLTKRMRVIREKVDVTREYEINEAVALLKELATAKFVESVDVAVNLGIDARKSDQNVRGATVLPHGTGRDIRVAVFAQGANAEAAKEAGADIVGMEDLAEQVKKGEMNFDVVVASPDAMRVVGQLGTILGPRGLMPNPKVGTVTPNVAEAVKNAKAGQVRYRNDKNGIIHTTIGKVDFSAEQIKENLEALLVALKKAKPSSAKGSYLKKVSISTTMGAGVAVDQGTLNTQA.

This sequence belongs to the universal ribosomal protein uL1 family. Part of the 50S ribosomal subunit.

Its function is as follows. Binds directly to 23S rRNA. The L1 stalk is quite mobile in the ribosome, and is involved in E site tRNA release. In terms of biological role, protein L1 is also a translational repressor protein, it controls the translation of the L11 operon by binding to its mRNA. This is Large ribosomal subunit protein uL1 from Vibrio vulnificus (strain CMCP6).